The sequence spans 708 residues: O-antigen chain terminator bifunctional methyltransferase/kinase WbdD (708 aa).

A methyltransferase region spans residues 1 to 210; the sequence is MTKDLNTLVS…VPRPMYLVSN (210 aa). S-adenosyl-L-methionine-binding positions include 16 to 17, Arg-36, Gly-61, 82 to 87, 108 to 111, and Leu-128; these read YQ, DFQQEN, and GRIE. The tract at residues 211-459 is kinase; it reads HRVLINDFNQ…AKLPSAEQQR (249 aa). Residues Pro-229, His-237, 241–243, Lys-252, Glu-274, 309–311, Met-358, and Asp-369 contribute to the ATP site; these read RRY and EKL. Positions 485 to 594 form a coiled coil; the sequence is AGSEALRGQI…EIEKIHRSRS (110 aa). The tract at residues 601–669 is required for membrane-binding; it reads YRYLGLQIHL…RLYRRMNPLP (69 aa). The tract at residues 687-708 is required for localizing WbdA to the membrane; it reads VMHPELLPPEVYEIYLKLTKNK.

Belongs to the WbdD family. Homotrimer in solution. Interacts with WbdA.

Its subcellular location is the cell inner membrane. The catalysed reaction is 3-O-phospho-alpha-D-Man-(1-&gt;2)-alpha-D-Man-(1-&gt;2)-[alpha-D-Man-(1-&gt;3)-alpha-D-Man-(1-&gt;3)-alpha-D-Man-(1-&gt;2)-alpha-D-Man-(1-&gt;2)](n)-alpha-D-Man-(1-&gt;3)-alpha-D-Man-(1-&gt;3)-alpha-D-Man-(1-&gt;3)-alpha-D-GlcNAc-di-trans,octa-cis-undecaprenyl diphosphate + S-adenosyl-L-methionine = 3-O-methylphospho-alpha-D-Man-(1-&gt;2)-alpha-D-Man-(1-&gt;2)-[alpha-D-Man-(1-&gt;3)-alpha-D-Man-(1-&gt;3)-alpha-D-Man-(1-&gt;2)-alpha-D-Man-(1-&gt;2)](n)-alpha-D-Man-(1-&gt;3)-alpha-D-Man-(1-&gt;3)-alpha-D-Man-(1-&gt;3)-alpha-D-GlcNAc-di-trans,octa-cis-undecaprenyl diphosphate + S-adenosyl-L-homocysteine. The enzyme catalyses alpha-D-Man-(1-&gt;2)-alpha-D-Man-(1-&gt;2)-[alpha-D-Man-(1-&gt;3)-alpha-D-Man-(1-&gt;3)-alpha-D-Man-(1-&gt;2)-alpha-D-Man-(1-&gt;2)](n)-alpha-D-Man-(1-&gt;3)-alpha-D-Man-(1-&gt;3)-alpha-D-Man-(1-&gt;3)-alpha-D-GlcNAc-di-trans,octa-cis-undecaprenyl diphosphate + ATP = 3-O-phospho-alpha-D-Man-(1-&gt;2)-alpha-D-Man-(1-&gt;2)-[alpha-D-Man-(1-&gt;3)-alpha-D-Man-(1-&gt;3)-alpha-D-Man-(1-&gt;2)-alpha-D-Man-(1-&gt;2)](n)-alpha-D-Man-(1-&gt;3)-alpha-D-Man-(1-&gt;3)-alpha-D-Man-(1-&gt;3)-alpha-D-GlcNAc-di-trans,octa-cis-undecaprenyl diphosphate + ADP + H(+). It functions in the pathway bacterial outer membrane biogenesis; LPS O-antigen biosynthesis. Its function is as follows. Regulates the length of the LPS O-antigen polysaccharide chain. Stops the polymerization of the chain by phosphorylating and then methylating the phosphate on the terminal sugar. This terminal modification is essential for export of the O-antigen across the inner membrane. WbdD is also required for correct localization of the WbdA mannosyltransferase. The protein is O-antigen chain terminator bifunctional methyltransferase/kinase WbdD of Escherichia coli.